A 218-amino-acid chain; its full sequence is Redox-sensing transcriptional repressor Rex (218 aa).

Positions 25 to 64 form a DNA-binding region, H-T-H motif; that stretch reads WYLSYVQLLHADGCESVSSTRIARAVGVDASLVAKDLSYV. An NAD(+)-binding site is contributed by 99-104; the sequence is GVGSLG.

Belongs to the transcriptional regulatory Rex family. As to quaternary structure, homodimer.

The protein resides in the cytoplasm. Functionally, modulates transcription in response to changes in cellular NADH/NAD(+) redox state. The chain is Redox-sensing transcriptional repressor Rex from Porphyromonas gingivalis (strain ATCC BAA-308 / W83).